We begin with the raw amino-acid sequence, 82 residues long: MAVKMRLKRMGAKKAPFYRVVVADSRSPRDGRFVEEIGYYNPITEPSTIKLDEEKVQKWIKNGAQPTDTVKKLIEKAGISVK.

This sequence belongs to the bacterial ribosomal protein bS16 family.

This is Small ribosomal subunit protein bS16 from Clostridium botulinum (strain ATCC 19397 / Type A).